The chain runs to 424 residues: Glutamate-1-semialdehyde 2,1-aminomutase (424 aa).

N6-(pyridoxal phosphate)lysine is present on Lys-258.

It belongs to the class-III pyridoxal-phosphate-dependent aminotransferase family. HemL subfamily. Pyridoxal 5'-phosphate serves as cofactor.

It is found in the cytoplasm. The enzyme catalyses (S)-4-amino-5-oxopentanoate = 5-aminolevulinate. The protein operates within porphyrin-containing compound metabolism; protoporphyrin-IX biosynthesis; 5-aminolevulinate from L-glutamyl-tRNA(Glu): step 2/2. The protein is Glutamate-1-semialdehyde 2,1-aminomutase of Pyrobaculum islandicum (strain DSM 4184 / JCM 9189 / GEO3).